The following is a 254-amino-acid chain: Arginine/ornithine transport ATP-binding protein AotP (254 aa).

One can recognise an ABC transporter domain in the interval 4-249 (LEVQDLHKRY…PQSDRLKQFL (246 aa)). 36-43 (GSSGSGKS) is a binding site for ATP.

It belongs to the ABC transporter superfamily.

It localises to the cell inner membrane. Part of the arginine-inducible binding-protein-dependent transport system for arginine and ornithine. Probably responsible for energy coupling to the transport system. The chain is Arginine/ornithine transport ATP-binding protein AotP (aotP) from Pseudomonas aeruginosa (strain ATCC 15692 / DSM 22644 / CIP 104116 / JCM 14847 / LMG 12228 / 1C / PRS 101 / PAO1).